A 585-amino-acid polypeptide reads, in one-letter code: YTH domain-containing family protein 3 (585 aa).

3 disordered regions span residues 1–51 (MSAT…SYPP), 244–277 (KPAK…MNIG), and 304–350 (PQPL…QPQL). Ser2 carries the N-acetylserine modification. Residues 15–24 (NKVSVQNGSI) are compositionally biased toward polar residues. Ser23 is modified (phosphoserine). The segment covering 244 to 254 (KPAKPQPKLKP) has biased composition (basic residues). Over residues 329–350 (QQQQGPQPQAQPHQVQSQQPQL) the composition is skewed to low complexity. The YTH domain occupies 416-550 (GRVFIIKSYS…EKAKQVLKII (135 aa)). RNA contacts are provided by residues 422–424 (KSY), Asp428, 438–439 (WC), Asn468, Trp492, and Trp497.

Belongs to the YTHDF family. YTHDF3 subfamily. Interacts with CNOT1; promoting recruitment of the CCR4-NOT complex. Interacts with YTHDF1. Interacts with YTHDF2. Interacts with PAN3.

The protein resides in the cytoplasm. It is found in the cytosol. Its subcellular location is the P-body. The protein localises to the stress granule. Specifically recognizes and binds N6-methyladenosine (m6A)-containing RNAs, and regulates their stability. M6A is a modification present at internal sites of mRNAs and some non-coding RNAs and plays a role in mRNA stability and processing. Acts as a regulator of mRNA stability by promoting degradation of m6A-containing mRNAs via interaction with the CCR4-NOT complex or PAN3. The YTHDF paralogs (YTHDF1, YTHDF2 and YTHDF3) share m6A-containing mRNAs targets and act redundantly to mediate mRNA degradation and cellular differentiation. Acts as a negative regulator of type I interferon response by down-regulating interferon-stimulated genes (ISGs) expression: acts by binding to FOXO3 mRNAs. Binds to FOXO3 mRNAs independently of METTL3-mediated m6A modification. Can also act as a regulator of mRNA stability in cooperation with YTHDF2 by binding to m6A-containing mRNA and promoting their degradation. Recognizes and binds m6A-containing circular RNAs (circRNAs); circRNAs are generated through back-splicing of pre-mRNAs, a non-canonical splicing process promoted by dsRNA structures across circularizing exons. Promotes formation of phase-separated membraneless compartments, such as P-bodies or stress granules, by undergoing liquid-liquid phase separation upon binding to mRNAs containing multiple m6A-modified residues: polymethylated mRNAs act as a multivalent scaffold for the binding of YTHDF proteins, juxtaposing their disordered regions and thereby leading to phase separation. The resulting mRNA-YTHDF complexes then partition into different endogenous phase-separated membraneless compartments, such as P-bodies, stress granules or neuronal RNA granules. May also recognize and bind N1-methyladenosine (m1A)-containing mRNAs: inhibits trophoblast invasion by binding to m1A-methylated transcripts of IGF1R, promoting their degradation. In Mus musculus (Mouse), this protein is YTH domain-containing family protein 3.